The following is a 42-amino-acid chain: Daisho1 (42 aa).

An N-terminal signal peptide occupies residues 1-20 (MKFFQAAALLLAMFAALANA). The propeptide at 21 to 26 (EPVPQP) is removed by a dipeptidylpeptidase. T41 is modified (threonine amide).

Hemolymph (at protein level).

It localises to the secreted. Its function is as follows. Peptide which plays a role in the humoral immune response to a subset of filamentous fungi, including F.oxysporum and F.verticillioides. This Drosophila melanogaster (Fruit fly) protein is Daisho1.